We begin with the raw amino-acid sequence, 92 residues long: Small ribosomal subunit protein uS19 (92 aa).

This sequence belongs to the universal ribosomal protein uS19 family.

Its function is as follows. Protein S19 forms a complex with S13 that binds strongly to the 16S ribosomal RNA. The polypeptide is Small ribosomal subunit protein uS19 (Mycoplasmopsis synoviae (strain 53) (Mycoplasma synoviae)).